A 268-amino-acid chain; its full sequence is tRNA pseudouridine synthase A (268 aa).

The active-site Nucleophile is the aspartate 52. Tyrosine 110 lines the substrate pocket.

This sequence belongs to the tRNA pseudouridine synthase TruA family. Homodimer.

The catalysed reaction is uridine(38/39/40) in tRNA = pseudouridine(38/39/40) in tRNA. Functionally, formation of pseudouridine at positions 38, 39 and 40 in the anticodon stem and loop of transfer RNAs. This chain is tRNA pseudouridine synthase A, found in Prochlorococcus marinus subsp. pastoris (strain CCMP1986 / NIES-2087 / MED4).